A 678-amino-acid chain; its full sequence is MRPSQTALWLGLVLSLALLAVGWASARPPIYVSSWAVRVTKGYQEAERLARKFGFVNLGQIFPDDQYFHLRHRGVAQQSLTPHWGHRLRLKKEPKVRWFEQQTLRRRVKRSLVVPTDPWFSKQWYMNKEIEQDLNILKVWNQGLTGRGVVVSILDDGIEKDHPDLWANYDPLASYDFNDYDPDPQPRYTPNDENRHGTRCAGEVSATANNGFCGAGVAFNARIGGVRMLDGAITDIVEAQSLSLQPQHIHIYSASWGPEDDGRTVDGPGLLTQEAFRRGVTKGRQGLGTLFIWASGNGGLHYDNCNCDGYTNSIHTLSVGSTTRQGRVPWYSEACASTFTTTFSSGVVTDPQIVTTDLHHQCTDKHTGTSASAPLAAGMIALALEANPLLTWRDLQHLVVRASRPAQLQAEDWRINGVGRQVSHHYGYGLLDAGLLVDLARVWLPTKPQKKCTIRVVHTPTPILPRMLVPKNVTVCCDGSRRRLIRSLEHVQVQLSLSYSRRGDLEIFLTSPMGTRSTLVAIRPLDISGQGYNNWIFMSTHYWDEDPQGLWTLGLENKGYYYNTGTLYYCTLLLYGTAEDMTARPQTPQESHCPLSIVAELCLISSKQWWWLYSHTQQPVTKGQDSCHPPTTPARQLDQRLHCLFPAPHAGSASEPLQGLSPLAAILAISLGPWCCPC.

A signal peptide spans 1–26; it reads MRPSQTALWLGLVLSLALLAVGWASA. The propeptide occupies 27 to 110; the sequence is RPPIYVSSWA…QQTLRRRVKR (84 aa). Residues 123 to 437 form the Peptidase S8 domain; it reads QWYMNKEIEQ…YGLLDAGLLV (315 aa). Active-site charge relay system residues include aspartate 155, histidine 196, and serine 370. One can recognise a P/Homo B domain in the interval 446–580; the sequence is TKPQKKCTIR…TLLLYGTAED (135 aa). An N-linked (GlcNAc...) asparagine glycan is attached at asparagine 472.

Belongs to the peptidase S8 family. Furin subfamily. The proPCSK4 form interacts with HSPA5; the interaction takes place at the endoplasmic reticulum. N-glycosylated. In terms of processing, synthesized in the endoplasmic reticulum as a zymogen, is matured by autocatalytic cleavage between the prodomain and the catalytic domain. As to expression, expressed abundantly in the testis. High levels seen in germ cells but not in Leydig, Sertoli or peritubular cells. Expressed in the pachytene spermatocytes and the round spermatids but not in the elongating spermatids. May be expressed within hormonally stimulated ovaries.

Its subcellular location is the cytoplasmic vesicle. The protein localises to the secretory vesicle. It localises to the acrosome membrane. Its function is as follows. Proprotein convertase involved in the processing of hormone and other protein precursors at sites comprised of pairs of basic amino acid residues. In males, important for ADAM2 processing as well as other acrosomal proteins with roles in fertilization and critical for normal fertilization events such as sperm capacitation, acrosome reaction and binding of sperm to zona pellucida. Plays also a role in female fertility, involved in the regulation of trophoblast migration and placental development, may be through the proteolytical processing and activation of proteins such as IGF2. May also participate in folliculogenesis in the ovaries. The chain is Proprotein convertase subtilisin/kexin type 4 (Pcsk4) from Rattus norvegicus (Rat).